Reading from the N-terminus, the 350-residue chain is Secreted effector protein PipB2 (350 aa).

Pentapeptide repeat domains are found at residues 162 to 201, 202 to 241, 247 to 286, and 287 to 326; these read ANLT…NLSG, TSLG…SLLG, CNCS…IMED, and AVLT…TLTH.

As to quaternary structure, interacts with the host kinesin light chain (KLC), a subunit of the kinesin-1 motor complex.

Its subcellular location is the secreted. The protein resides in the host membrane. Its function is as follows. Effector proteins function to alter host cell physiology and promote bacterial survival in host tissues. Involved in the reorganization of late endosome/lysosome (LE/Lys) compartments in mammalian cells. Necessary and sufficient to link kinesin-1 onto the Salmonella-containing vacuole (SCV) membrane. Required for centrifugal extension of lysosomal glycoprotein-rich membrane tubules, known as Salmonella-induced filaments (Sifs), away from the SCV and toward the cell periphery. Required for virulence, but not for intracellular survival and replication in phagocytic cells. The protein is Secreted effector protein PipB2 (pipB2) of Salmonella choleraesuis (strain SC-B67).